A 72-amino-acid chain; its full sequence is Phaiodotoxin-3 (72 aa).

The region spanning Lys1–Ala72 is the LCN-type CS-alpha/beta domain. 4 disulfide bridges follow: Cys13–Cys38, Cys23–Cys50, Cys27–Cys52, and Cys63–Cys71.

This sequence belongs to the long (4 C-C) scorpion toxin superfamily. Sodium channel inhibitor family. As to expression, expressed by the venom gland.

The protein resides in the secreted. Functionally, sodium channel (Nav) specific neurotoxin. The polypeptide is Phaiodotoxin-3 (Anuroctonus phaiodactylus (Mafia scorpion)).